A 358-amino-acid polypeptide reads, in one-letter code: UDP-N-acetylglucosamine--N-acetylmuramyl-(pentapeptide) pyrophosphoryl-undecaprenol N-acetylglucosamine transferase (358 aa).

S197 and Q288 together coordinate UDP-N-acetyl-alpha-D-glucosamine.

This sequence belongs to the glycosyltransferase 28 family. MurG subfamily.

It localises to the cell membrane. It catalyses the reaction Mur2Ac(oyl-L-Ala-gamma-D-Glu-L-Lys-D-Ala-D-Ala)-di-trans,octa-cis-undecaprenyl diphosphate + UDP-N-acetyl-alpha-D-glucosamine = beta-D-GlcNAc-(1-&gt;4)-Mur2Ac(oyl-L-Ala-gamma-D-Glu-L-Lys-D-Ala-D-Ala)-di-trans,octa-cis-undecaprenyl diphosphate + UDP + H(+). It participates in cell wall biogenesis; peptidoglycan biosynthesis. Its function is as follows. Cell wall formation. Catalyzes the transfer of a GlcNAc subunit on undecaprenyl-pyrophosphoryl-MurNAc-pentapeptide (lipid intermediate I) to form undecaprenyl-pyrophosphoryl-MurNAc-(pentapeptide)GlcNAc (lipid intermediate II). The protein is UDP-N-acetylglucosamine--N-acetylmuramyl-(pentapeptide) pyrophosphoryl-undecaprenol N-acetylglucosamine transferase of Streptococcus agalactiae serotype Ia (strain ATCC 27591 / A909 / CDC SS700).